We begin with the raw amino-acid sequence, 132 residues long: UPF0299 membrane protein YohJ (132 aa).

Helical transmembrane passes span 5–25 (LNIIWQYLRAFVLIYACLYAG), 26–46 (IFIASLLPVTIPGSIIGMLIL), 63–83 (GCYVLIRYMALLFVPIGVGVM), and 93–113 (FGPVVVSCAVSTLVVFLVVSW).

It belongs to the UPF0299 family.

Its subcellular location is the cell inner membrane. The protein is UPF0299 membrane protein YohJ of Shigella flexneri serotype 5b (strain 8401).